The chain runs to 459 residues: Sensor histidine kinase SpaK (459 aa).

The Cytoplasmic portion of the chain corresponds to 1 to 18 (MGIGFKGRKTLLRELVKY). A helical membrane pass occupies residues 19–39 (MVTLCISLVVLALLYIFINTI). At 40-155 (AMNTGFSHPA…RKYLPNYELT (116 aa)) the chain is on the extracellular side. The chain crosses the membrane as a helical span at residues 156-176 (SICILIILLIIVISIITTYFA). Residues 177 to 459 (NRLRKHFETL…VRVKIPLRNE (283 aa)) lie on the Cytoplasmic side of the membrane. The region spanning 244–458 (ALAHEIKIPI…EVRVKIPLRN (215 aa)) is the Histidine kinase domain. His-247 carries the post-translational modification Phosphohistidine; by autocatalysis.

The protein localises to the cell membrane. The catalysed reaction is ATP + protein L-histidine = ADP + protein N-phospho-L-histidine.. In terms of biological role, member of the two-component regulatory system SpaK/SpaR involved in the regulation of the biosynthesis of lantibiotic subtilin. SpaK may function as a membrane-associated protein kinase that phosphorylates SpaR in response to environmental signals. In Bacillus subtilis, this protein is Sensor histidine kinase SpaK (spaK).